The chain runs to 178 residues: Large ribosomal subunit protein uL10 (178 aa).

Belongs to the universal ribosomal protein uL10 family. As to quaternary structure, part of the ribosomal stalk of the 50S ribosomal subunit. The N-terminus interacts with L11 and the large rRNA to form the base of the stalk. The C-terminus forms an elongated spine to which L12 dimers bind in a sequential fashion forming a multimeric L10(L12)X complex.

Forms part of the ribosomal stalk, playing a central role in the interaction of the ribosome with GTP-bound translation factors. The protein is Large ribosomal subunit protein uL10 of Gloeothece citriformis (strain PCC 7424) (Cyanothece sp. (strain PCC 7424)).